The sequence spans 155 residues: 6,7-dimethyl-8-ribityllumazine synthase (155 aa).

5-amino-6-(D-ribitylamino)uracil-binding positions include F24, 58 to 60 (AFE), and 82 to 84 (VII). 87-88 (ST) serves as a coordination point for (2S)-2-hydroxy-3-oxobutyl phosphate. H90 serves as the catalytic Proton donor. Residue F115 coordinates 5-amino-6-(D-ribitylamino)uracil. Residue R129 participates in (2S)-2-hydroxy-3-oxobutyl phosphate binding.

It belongs to the DMRL synthase family.

The enzyme catalyses (2S)-2-hydroxy-3-oxobutyl phosphate + 5-amino-6-(D-ribitylamino)uracil = 6,7-dimethyl-8-(1-D-ribityl)lumazine + phosphate + 2 H2O + H(+). It functions in the pathway cofactor biosynthesis; riboflavin biosynthesis; riboflavin from 2-hydroxy-3-oxobutyl phosphate and 5-amino-6-(D-ribitylamino)uracil: step 1/2. Functionally, catalyzes the formation of 6,7-dimethyl-8-ribityllumazine by condensation of 5-amino-6-(D-ribitylamino)uracil with 3,4-dihydroxy-2-butanone 4-phosphate. This is the penultimate step in the biosynthesis of riboflavin. This is 6,7-dimethyl-8-ribityllumazine synthase from Pelodictyon phaeoclathratiforme (strain DSM 5477 / BU-1).